A 345-amino-acid polypeptide reads, in one-letter code: Serine/threonine-protein kinase US3 homolog (345 aa).

A Protein kinase domain is found at 49–334 (FSVLETFTPG…KALLDFAAFY (286 aa)). ATP contacts are provided by residues 55–63 (FTPGAEGFT) and lysine 78. The active-site Proton acceptor is the aspartate 162.

The protein belongs to the protein kinase superfamily. Ser/Thr protein kinase family. Post-translationally, phosphorylated by UL13 homolog; this phosphorylation regulates subsequent phosphorylation of UL31 and UL34 homologs by US3. Autophosphorylated.

The protein resides in the host cytoplasm. Its subcellular location is the host nucleus. The enzyme catalyses L-seryl-[protein] + ATP = O-phospho-L-seryl-[protein] + ADP + H(+). It catalyses the reaction L-threonyl-[protein] + ATP = O-phospho-L-threonyl-[protein] + ADP + H(+). Functionally, multifunctional serine/threonine kinase that plays a role in several processes including egress of virus particles from the nucleus, modulation of the actin cytoskeleton and inhibition of apoptosis. Phosphorylates UL31 and UL34 homologs, two critical regulators of capsid budding from nucleus to endoplasmic reticulum, thereby facilitating virion egress. Modulates and redistributes host components of the nuclear envelope, including LMNA, emerin/EMD and the nuclear matrix protein MATR3. Phosphorylates envelope glycoprotein B (gB), probably to direct it to the cell surface. Promotes virus intracellular spread by restructuring host cell cytoskeleton. Blocks host apoptosis to extend cell survival and allow efficient viral replication. Promotes viral gene expression by phosphorylating host HDAC2 to reduce viral genome silencing. The protein is Serine/threonine-protein kinase US3 homolog (US2) of Chlorocebus aethiops (Green monkey).